The chain runs to 340 residues: Delta(1)-pyrroline-2-carboxylate reductase 2 (340 aa).

S50 functions as the Charge relay system in the catalytic mechanism. Catalysis depends on H51, which acts as the Proton donor. R55 is a substrate binding site. 123–127 (HFSAL) is a binding site for NADP(+). T163 contributes to the substrate binding site. Residue 181–183 (DFA) coordinates NADP(+). Substrate is bound at residue 189–190 (RG). D191 (charge relay system) is an active-site residue. NADP(+)-binding positions include 232 to 233 (HK) and 307 to 313 (RLPSQRR).

Belongs to the LDH2/MDH2 oxidoreductase family. Homodimer.

The enzyme catalyses L-proline + NAD(+) = 1-pyrroline-2-carboxylate + NADH + H(+). The catalysed reaction is L-proline + NADP(+) = 1-pyrroline-2-carboxylate + NADPH + H(+). Functionally, catalyzes the reduction of Delta(1)-pyrroline-2-carboxylate (Pyr2C) to L-proline, using NADPH as the electron donor. May be involved in a degradation pathway that converts trans-3-hydroxy-L-proline (t3LHyp) to L-proline. The polypeptide is Delta(1)-pyrroline-2-carboxylate reductase 2 (Burkholderia multivorans (strain ATCC 17616 / 249)).